The primary structure comprises 1036 residues: Pre-mRNA-processing factor 39-2 (1036 aa).

Residues 1 to 24 (MVTTEVRTAVSDKEPLQRSPELDS) form a disordered region. HAT repeat units lie at residues 62–94 (DDIEKLCLVYDAFLLEFPLCHGYWRKYAYHKIK), 96–128 (CTLEDAVEVFERAVQAATYSVAVWLDYCAFAVA), 131–166 (EDPHDVSRLFERGLSFIGKDYSCCTLWDKYIEYLLG), 168–201 (QQWSSLANVYLRTLKYPSKKLDLYYKNFRKIAAS), 278–310 (CFETQIRRPYFHVKPLDTNQLDNWHAYLSFGET), and 312–344 (GDFDWAINLYERCLIPCANYTEFWFRYVDFVES). Disordered regions lie at residues 595–618 (GISSIVDSPPKEKKESSLDSYGTQ), 714–767 (PSGS…PVGT), and 995–1036 (KGDE…ISSI). Residues 714–726 (PSGSQSPQSYQSQ) are compositionally biased toward low complexity. Residues 740-755 (RDLNQMHRDSKPRSQE) are compositionally biased toward basic and acidic residues. Residues 1002 to 1036 (SMPQGSTTNSDIQKSQESGAVNEANLSSDTSISSI) are compositionally biased toward polar residues.

Belongs to the PRP39 family.

The protein resides in the nucleus. In terms of biological role, involved in pre-mRNA splicing. The sequence is that of Pre-mRNA-processing factor 39-2 from Arabidopsis thaliana (Mouse-ear cress).